Reading from the N-terminus, the 328-residue chain is DNA-directed RNA polymerase subunit alpha 2 (328 aa).

The tract at residues 1–234 (MQGSVIEFLK…EQLDAFVDLR (234 aa)) is alpha N-terminal domain (alpha-NTD). Residues 248-328 (FDPILLRPVD…NWPPASLSED (81 aa)) form an alpha C-terminal domain (alpha-CTD) region.

Belongs to the RNA polymerase alpha chain family. Homodimer. The RNAP catalytic core consists of 2 alpha, 1 beta, 1 beta' and 1 omega subunit. When a sigma factor is associated with the core the holoenzyme is formed, which can initiate transcription.

The enzyme catalyses RNA(n) + a ribonucleoside 5'-triphosphate = RNA(n+1) + diphosphate. DNA-dependent RNA polymerase catalyzes the transcription of DNA into RNA using the four ribonucleoside triphosphates as substrates. This is DNA-directed RNA polymerase subunit alpha 2 from Psychromonas ingrahamii (strain DSM 17664 / CCUG 51855 / 37).